The chain runs to 181 residues: SRP-independent targeting protein 2 (181 aa).

The Cytoplasmic portion of the chain corresponds to 1–15 (MAGKAGRKQASSNAK). The chain crosses the membrane as a helical span at residues 16–36 (IIQGLYKQVSLFLGMAIVRLF). The Lumenal segment spans residues 37 to 45 (ISRKVTIGQ). A helical membrane pass occupies residues 46–66 (WIKLVALNVPMFVALYIIVLS). Residues 67 to 89 (GKPKYDGNRVVKQGIDLNDNTNL) lie on the Cytoplasmic side of the membrane. A helical transmembrane segment spans residues 90–110 (ISYFFDLIYLSLFGNIGIIAF). Topologically, residues 111–112 (RT) are lumenal. A helical membrane pass occupies residues 113–133 (FKFWWCLLLCPIYAGYKLYGL). At 134 to 181 (KNMFMPGAQQTQADNRSKNANEGQSKSKRQMKRERRGETDSKIKYKYR) the chain is on the cytoplasmic side. Polar residues predominate over residues 144-157 (TQADNRSKNANEGQ). Positions 144 to 181 (TQADNRSKNANEGQSKSKRQMKRERRGETDSKIKYKYR) are disordered. Over residues 168–181 (RRGETDSKIKYKYR) the composition is skewed to basic and acidic residues.

This sequence belongs to the TMEM208 family. Interacts with SND1, PHO88/SND3 and the translocon complex subunit SEC61. ENV10/SND2 and PHO88/SND3 form a complex with the translocon in the endoplasmic reticulum membrane.

It is found in the endoplasmic reticulum membrane. Its function is as follows. Functions in the SND pathway, a SRP (signal recognition particle) and GET (guided entry of tail-anchored proteins) independent pathway for targeting a broad range of substrate proteins to the endoplasmic reticulum. SND functions in parallel to GET in targeting proteins with downstream hydrophobic motifs. Involved in vacuolar processing and morphology. This is SRP-independent targeting protein 2 from Saccharomyces cerevisiae (strain ATCC 204508 / S288c) (Baker's yeast).